A 365-amino-acid polypeptide reads, in one-letter code: Alanine racemase (365 aa).

Catalysis depends on Lys-35, which acts as the Proton acceptor; specific for D-alanine. Lys-35 carries the post-translational modification N6-(pyridoxal phosphate)lysine. Arg-130 provides a ligand contact to substrate. Tyr-256 acts as the Proton acceptor; specific for L-alanine in catalysis. Met-304 serves as a coordination point for substrate.

This sequence belongs to the alanine racemase family. Pyridoxal 5'-phosphate is required as a cofactor.

It carries out the reaction L-alanine = D-alanine. The protein operates within amino-acid biosynthesis; D-alanine biosynthesis; D-alanine from L-alanine: step 1/1. Its function is as follows. Catalyzes the interconversion of L-alanine and D-alanine. May also act on other amino acids. This Acidovorax sp. (strain JS42) protein is Alanine racemase (alr).